The following is a 197-amino-acid chain: Recombination protein RecR (197 aa).

The segment at 56 to 71 adopts a C4-type zinc-finger fold; it reads CKRCGSYAETEICNIC. Residues 79–174 enclose the Toprim domain; sequence HTFCVVEQPE…DVTRIAYGIT (96 aa).

This sequence belongs to the RecR family.

Functionally, may play a role in DNA repair. It seems to be involved in an RecBC-independent recombinational process of DNA repair. It may act with RecF and RecO. The polypeptide is Recombination protein RecR (Leptospira borgpetersenii serovar Hardjo-bovis (strain JB197)).